The primary structure comprises 224 residues: MDCREMDLYEDYQSPFDFDAGVNKSYLYLSPSGNSSPPGSPTLQKFGLLRTDPVPEEGEDVAATISATETLSEEEQEELRRELAKVEEEIQTLSQVLAAKEKHLAEIKRKLGINSLQELKQNIAKGWQDVTATSAYKKTSETLSQAGQKASAAFSSVGSVITKKLEDVKNSPTFKSFEEKVENLKSKVGGTKPAGGDFGEVLNSAANASATTTEPLPEKTQESL.

Residues serine 36 and serine 40 each carry the phosphoserine modification. Residues 62-114 (AATISATETLSEEEQEELRRELAKVEEEIQTLSQVLAAKEKHLAEIKRKLGIN) are a coiled coil. A Phosphoserine modification is found at serine 176. The segment at 187–224 (KVGGTKPAGGDFGEVLNSAANASATTTEPLPEKTQESL) is disordered. Over residues 203 to 213 (NSAANASATTT) the composition is skewed to low complexity. Serine 223 is modified (phosphoserine).

The protein belongs to the TPD52 family. Forms a homodimer or heterodimer with other members of the family. All isoforms interact with several 14-3-3 proteins. As to expression, isoform 2 is expressed in colon, breast, prostate, pancreas and kidney tumor cell lines. Isoform 2 is expressed at high levels in kidney, prostate, brain, small intestine and pancreas, at moderate levels in placenta and colon, at low levels in lung, liver and heart, and at very low levels in spleen, thymus, peripheral mononuclear blood cells, testis and ovary.

The protein is Tumor protein D52 (TPD52) of Homo sapiens (Human).